The sequence spans 349 residues: Ferredoxin--NADP reductase 1 (349 aa).

7 residues coordinate FAD: glutamate 36, lysine 44, tyrosine 48, valine 88, leucine 123, aspartate 290, and serine 331.

Belongs to the ferredoxin--NADP reductase type 2 family. As to quaternary structure, homodimer. The cofactor is FAD.

The catalysed reaction is 2 reduced [2Fe-2S]-[ferredoxin] + NADP(+) + H(+) = 2 oxidized [2Fe-2S]-[ferredoxin] + NADPH. This chain is Ferredoxin--NADP reductase 1, found in Bacillus licheniformis (strain ATCC 14580 / DSM 13 / JCM 2505 / CCUG 7422 / NBRC 12200 / NCIMB 9375 / NCTC 10341 / NRRL NRS-1264 / Gibson 46).